A 189-amino-acid chain; its full sequence is MTEYKLVVVGAGGVGKSALTIQLIQNHFVDEYDPTIEDSYRKQVVIDGETCLLDILDTAGQEEYSAMRDQYMRTGEGFLCVFAINNTKSFEDIHHYREQIKRVKDSEDVPMVLVGNKCDLPSRTVDTKQAQELARSYGIPFIETSAKTRQRVEDAFYTLVREIRQYRLKKISKEEKTPGCVKIKKCVIM.

Position 1 is an N-acetylmethionine (methionine 1). Threonine 2 carries the N-acetylthreonine; in GTPase KRas, N-terminally processed modification. GTP-binding positions include 10–18 (GAGGVGKSA), 29–35 (VDEYDPT), and 59–60 (AG). An Effector region motif is present at residues 32–40 (YDPTIEDSY). The residue at position 104 (lysine 104) is an N6-acetyllysine. 116–119 (NKCD) contributes to the GTP binding site. Residues 166 to 185 (YRLKKISKEEKTPGCVKIKK) are hypervariable region. Residue lysine 170 forms a Glycyl lysine isopeptide (Lys-Gly) (interchain with G-Cter in ubiquitin) linkage. A lipid anchor (S-palmitoyl cysteine) is attached at cysteine 180. Residues lysine 182, lysine 184, and lysine 185 are each lipidated (N6-palmitoyl lysine). The residue at position 186 (cysteine 186) is a Cysteine methyl ester. Cysteine 186 carries the S-farnesyl cysteine lipid modification. A propeptide spans 187 to 189 (VIM) (removed in mature form).

It belongs to the small GTPase superfamily. Ras family. In terms of assembly, interacts with PHLPP. Interacts (active GTP-bound form preferentially) with RGS14. Interacts (when farnesylated) with PDE6D; this promotes dissociation from the cell membrane. Interacts with SOS1. Interacts (when farnesylated) with GPR31. Interacts with RAP1GDS1. Interacts (active GTP-bound form) with both SHOC2 and PP1c (all isoforms) to form a tertiary complex; SHOC2 and PP1c preferably bind M-Ras/MRAS, but they also bind K-Ras/KRAS, N-Ras/NRAS and H-Ras/HRAS. Interacts (GTP-bound form) with MAPKAP1/SIN1; inhibiting K-Ras/KRAS activity. Interacts (when farnesylated) with GPR31. Acetylation at Lys-104 prevents interaction with guanine nucleotide exchange factors (GEFs). Post-translationally, ubiquitinated by the BCR(LZTR1) E3 ubiquitin ligase complex at Lys-170 in a non-degradative manner, leading to inhibit Ras signaling by decreasing Ras association with membranes. In terms of processing, palmitoylated at Lys-182, Lys-184 and Lys-185. Lysine-depalmitoylation by SIRT2 promotes its localization to endomembranes in endocytic pathways.

The protein resides in the cell membrane. Its subcellular location is the endomembrane system. It localises to the cytoplasm. It is found in the cytosol. It catalyses the reaction GTP + H2O = GDP + phosphate + H(+). Its activity is regulated as follows. Alternates between an inactive form bound to GDP and an active form bound to GTP. Activated by a guanine nucleotide-exchange factor (GEF) and inactivated by a GTPase-activating protein (GAP). Interaction with SOS1 promotes exchange of bound GDP to GTP. In terms of biological role, ras proteins bind GDP/GTP and possess intrinsic GTPase activity. Plays an important role in the regulation of cell proliferation. Plays a role in promoting oncogenic events by inducing transcriptional silencing of tumor suppressor genes (TSGs) in colorectal cancer (CRC) cells in a ZNF304-dependent manner. The sequence is that of GTPase KRas (Kras) from Rattus norvegicus (Rat).